A 541-amino-acid chain; its full sequence is Chaperonin GroEL (541 aa).

Residues 29-32 (TLGP), 86-90 (DGTTT), Gly413, 476-478 (NAA), and Asp492 each bind ATP.

This sequence belongs to the chaperonin (HSP60) family. As to quaternary structure, forms a cylinder of 14 subunits composed of two heptameric rings stacked back-to-back. Interacts with the co-chaperonin GroES.

The protein localises to the cytoplasm. The catalysed reaction is ATP + H2O + a folded polypeptide = ADP + phosphate + an unfolded polypeptide.. Functionally, together with its co-chaperonin GroES, plays an essential role in assisting protein folding. The GroEL-GroES system forms a nano-cage that allows encapsulation of the non-native substrate proteins and provides a physical environment optimized to promote and accelerate protein folding. The protein is Chaperonin GroEL of Streptococcus equi subsp. zooepidemicus (strain H70).